A 184-amino-acid polypeptide reads, in one-letter code: ATP synthase subunit b, chloroplastic (184 aa).

The helical transmembrane segment at Ile4–Thr24 threads the bilayer.

The protein belongs to the ATPase B chain family. As to quaternary structure, F-type ATPases have 2 components, F(1) - the catalytic core - and F(0) - the membrane proton channel. F(1) has five subunits: alpha(3), beta(3), gamma(1), delta(1), epsilon(1). F(0) has four main subunits: a(1), b(1), b'(1) and c(10-14). The alpha and beta chains form an alternating ring which encloses part of the gamma chain. F(1) is attached to F(0) by a central stalk formed by the gamma and epsilon chains, while a peripheral stalk is formed by the delta, b and b' chains.

The protein localises to the plastid. It is found in the chloroplast thylakoid membrane. Its function is as follows. F(1)F(0) ATP synthase produces ATP from ADP in the presence of a proton or sodium gradient. F-type ATPases consist of two structural domains, F(1) containing the extramembraneous catalytic core and F(0) containing the membrane proton channel, linked together by a central stalk and a peripheral stalk. During catalysis, ATP synthesis in the catalytic domain of F(1) is coupled via a rotary mechanism of the central stalk subunits to proton translocation. Component of the F(0) channel, it forms part of the peripheral stalk, linking F(1) to F(0). The polypeptide is ATP synthase subunit b, chloroplastic (Physcomitrium patens (Spreading-leaved earth moss)).